The primary structure comprises 415 residues: NAD-dependent protein deacetylase hst4 (415 aa).

The segment at 1-26 (MKVEEHVPLIQESRKRKCQSSENASK) is disordered. Residues 40-337 (TGNENVDLSP…RRLKPLLDAP (298 aa)) enclose the Deacetylase sirtuin-type domain. NAD(+)-binding positions include 65 to 84 (GAGISCDAGIPDFRSSEGLF) and 153 to 156 (QNID). His184 functions as the Proton acceptor in the catalytic mechanism. 4 residues coordinate Zn(2+): Cys192, Cys195, Cys214, and Cys217. NAD(+) contacts are provided by residues 273 to 275 (GTS), 303 to 305 (NYD), and Leu323.

The protein belongs to the sirtuin family. Class I subfamily. Zn(2+) is required as a cofactor.

It is found in the nucleus. Its subcellular location is the nucleolus. It carries out the reaction N(6)-acetyl-L-lysyl-[protein] + NAD(+) + H2O = 2''-O-acetyl-ADP-D-ribose + nicotinamide + L-lysyl-[protein]. Functionally, NAD-dependent histone deacetylase, which contributes to both telomeric and centromeric silencing, proper cell cycle progression, DNA damage control, recombination, and genomic maintenance. The protein is NAD-dependent protein deacetylase hst4 (hst4) of Schizosaccharomyces pombe (strain 972 / ATCC 24843) (Fission yeast).